The following is a 428-amino-acid chain: MLHDDGDASVFVNRDLVEPDTIIDEERIVGRDEQLESVVSFLKPTLQGNRPPNMLLYGPAGTGKSLIIGAVTQQIIELCHSKGERFGVVQVNCQPINTLDQAVYELVQTVASDVGIEPGVPETGVSTKRKYRRLYDLINEHYDSVIFILDEIDLLVGRRANDEPAYSKLLYQLSRASNTNDIEGQVSVAALTNDPKFMENIDGRAESSFNPRDIYFPDYDATQLRQILENRRDAFRQDALTDDVLPLVSAFAAQSHGDARKAIDLFRGAGDLADEQGDQTVREDHVRESQDEIDKDRSLKLIAGLTTQKKISLYATAAVAHCSSATRNSVPSPVGFQVYQWVTEEIDADQMTRETYVKYVKELSTYGLVSTARKSRGRGGGMYMDFTFRGDPESMMHRVVDDTRLERVGTESERLHAVVNAQLREFEE.

ATP contacts are provided by residues 62 to 66, Y219, and R231; that span reads TGKSL.

The protein belongs to the CDC6/cdc18 family.

Functionally, involved in regulation of DNA replication. The chain is ORC1-type DNA replication protein 5 (orc5) from Halobacterium salinarum (strain ATCC 700922 / JCM 11081 / NRC-1) (Halobacterium halobium).